Reading from the N-terminus, the 459-residue chain is Cysteine desulfurase (459 aa).

Residues 1–17 (MVGSVAGNMLLRAAWRR) constitute a mitochondrion transit peptide. Positions 129, 130, 237, 257, and 259 each coordinate pyridoxal 5'-phosphate. N6-(pyridoxal phosphate)lysine is present on Lys-260. Thr-297 contacts pyridoxal 5'-phosphate. Cys-383 acts as the Cysteine persulfide intermediate in catalysis. Cys-383 serves as a coordination point for [2Fe-2S] cluster. Position 383 (Cys-383) interacts with Zn(2+). The residue at position 383 (Cys-383) is a Cysteine persulfide.

Belongs to the class-V pyridoxal-phosphate-dependent aminotransferase family. NifS/IscS subfamily. Homodimer. Component of the mitochondrial core iron-sulfur cluster (ISC) complex composed of NFS1, LYRM4, NDUFAB1, ISCU, FXN, and FDX2; this complex is a heterohexamer containing two copies of each monomer. Component of cyteine desulfurase complex composed of NFS1, LYRM4 and NDUFAB1; this complex contributes to the activation of cysteine desulfurase activity and NFS1 stabilization. Interacts (homodimer form) with ISCU (D-state); each monomer interacts with the C-terminal regions of each NFS1 monomer. Interacts with HSPA9. Interacts (via homodimer form) with FDX2. Interacts (via homodimer form) with FXN. Interacts with LYRM4. Component of a complex composed of FXN, NFS1, LYRM4 and ISCU. The cofactor is pyridoxal 5'-phosphate. N-gluconoylated. In terms of processing, cysteine persulfide intermediate is reduced by thiol-containing molecules like glutathione and L-cysteine. Persulfide reduction is a rate-limiting step of cysteine desulfurase catalytic cycle. As to expression, ubiquitous.

Its subcellular location is the mitochondrion. The enzyme catalyses (sulfur carrier)-H + L-cysteine = (sulfur carrier)-SH + L-alanine. The catalysed reaction is L-cysteinyl-[cysteine desulfurase] + L-cysteine = S-sulfanyl-L-cysteinyl-[cysteine desulfurase] + L-alanine. Active only in complex with LYRM4. Its function is as follows. Mitochondrial cysteine desulfurase, of the core iron-sulfur cluster (ISC) assembly complex, that catalyzes the desulfuration of L-cysteine to L-alanine, as component of the cysteine desulfurase complex, leading to the formation of a cysteine persulfide intermediate at the active site cysteine residue and participates in the [2Fe-2S] clusters assembly on the scaffolding protein ISCU. The persulfide is then transferred on the flexible Cys loop from the catalytic site of NFS1 to the surface of NFS1. After the NFS1-linked persulfide sulfur is transferred to one of the conserved Cys residues of the scaffold, a reaction assisted by FXN. The core iron-sulfur cluster (ISC) assembly complex is involved in the de novo synthesis of a [2Fe-2S] cluster, the first step of the mitochondrial iron-sulfur protein biogenesis. This process is initiated by the cysteine desulfurase complex (NFS1:LYRM4:NDUFAB1) that produces persulfide which is delivered on the scaffold protein ISCU in a FXN-dependent manner. Then this complex is stabilized by FDX2 which provides reducing equivalents to accomplish the [2Fe-2S] cluster assembly. Finally, the [2Fe-2S] cluster is transferred from ISCU to chaperone proteins, including HSCB, HSPA9 and GLRX5. The polypeptide is Cysteine desulfurase (Mus musculus (Mouse)).